The chain runs to 140 residues: PDZ domain-containing protein 11 (140 aa).

One can recognise a PDZ domain in the interval Ile47 to Tyr129.

As to quaternary structure, interacts with ATP2B1, ATP2B2, ATP2B3, ATP2B4 and ATP7A. Interacts with PLEKHA7 (via WW domains) at zonula adherens; this interaction is essential for the interaction between PLEKHA7 and the ADAM10-binding protein TSPAN33. Interacts with SLC5A6.

The protein localises to the cytoplasm. Its subcellular location is the cell junction. The protein resides in the adherens junction. It is found in the cell membrane. Functionally, mediates docking of ADAM10 to zonula adherens by interacting with PLEKHA7 which is required for PLEKHA7 to interact with the ADAM10-binding protein TSPAN33. In Mus musculus (Mouse), this protein is PDZ domain-containing protein 11 (Pdzd11).